A 153-amino-acid chain; its full sequence is Arginine repressor (153 aa).

Belongs to the ArgR family.

The protein localises to the cytoplasm. The protein operates within amino-acid biosynthesis; L-arginine biosynthesis [regulation]. Regulates arginine biosynthesis genes. The sequence is that of Arginine repressor from Actinobacillus pleuropneumoniae serotype 7 (strain AP76).